Consider the following 262-residue polypeptide: Small ribosomal subunit protein eS1 (262 aa).

Basic and acidic residues predominate over residues 235-253 (HGDGKGSDEPGAKVSRPEA). The tract at residues 235-262 (HGDGKGSDEPGAKVSRPEAYEPPVQESV) is disordered.

It belongs to the eukaryotic ribosomal protein eS1 family. As to quaternary structure, component of the small ribosomal subunit. Mature ribosomes consist of a small (40S) and a large (60S) subunit. The 40S subunit contains about 33 different proteins and 1 molecule of RNA (18S). The 60S subunit contains about 49 different proteins and 3 molecules of RNA (28S, 5.8S and 5S).

The protein resides in the cytoplasm. The polypeptide is Small ribosomal subunit protein eS1 (Triatoma infestans (Assassin bug)).